Here is a 306-residue protein sequence, read N- to C-terminus: Pantothenate kinase (306 aa).

91-98 serves as a coordination point for ATP; the sequence is GSVAVGKS.

Belongs to the prokaryotic pantothenate kinase family.

Its subcellular location is the cytoplasm. The catalysed reaction is (R)-pantothenate + ATP = (R)-4'-phosphopantothenate + ADP + H(+). It functions in the pathway cofactor biosynthesis; coenzyme A biosynthesis; CoA from (R)-pantothenate: step 1/5. This Streptococcus pneumoniae serotype 19F (strain G54) protein is Pantothenate kinase.